Reading from the N-terminus, the 427-residue chain is 4-hydroxy-3-methylbut-2-en-1-yl diphosphate synthase (flavodoxin) (427 aa).

The [4Fe-4S] cluster site is built by Cys-300, Cys-303, Cys-346, and Glu-353.

Belongs to the IspG family. The cofactor is [4Fe-4S] cluster.

The catalysed reaction is (2E)-4-hydroxy-3-methylbut-2-enyl diphosphate + oxidized [flavodoxin] + H2O + 2 H(+) = 2-C-methyl-D-erythritol 2,4-cyclic diphosphate + reduced [flavodoxin]. It participates in isoprenoid biosynthesis; isopentenyl diphosphate biosynthesis via DXP pathway; isopentenyl diphosphate from 1-deoxy-D-xylulose 5-phosphate: step 5/6. In terms of biological role, converts 2C-methyl-D-erythritol 2,4-cyclodiphosphate (ME-2,4cPP) into 1-hydroxy-2-methyl-2-(E)-butenyl 4-diphosphate. This Chromobacterium violaceum (strain ATCC 12472 / DSM 30191 / JCM 1249 / CCUG 213 / NBRC 12614 / NCIMB 9131 / NCTC 9757 / MK) protein is 4-hydroxy-3-methylbut-2-en-1-yl diphosphate synthase (flavodoxin).